A 153-amino-acid polypeptide reads, in one-letter code: 3-hydroxyacyl-[acyl-carrier-protein] dehydratase FabZ (153 aa).

The active site involves histidine 54.

Belongs to the thioester dehydratase family. FabZ subfamily.

The protein resides in the cytoplasm. It carries out the reaction a (3R)-hydroxyacyl-[ACP] = a (2E)-enoyl-[ACP] + H2O. Functionally, involved in unsaturated fatty acids biosynthesis. Catalyzes the dehydration of short chain beta-hydroxyacyl-ACPs and long chain saturated and unsaturated beta-hydroxyacyl-ACPs. The polypeptide is 3-hydroxyacyl-[acyl-carrier-protein] dehydratase FabZ (Shewanella loihica (strain ATCC BAA-1088 / PV-4)).